A 241-amino-acid polypeptide reads, in one-letter code: Homeobox protein TGIF2LX (241 aa).

2 disordered regions span residues 1–58 (MEAA…GNLP) and 126–209 (TGKD…VSPE). The segment covering 21-39 (AKTQSPAQDTSIMSRNNAD) has biased composition (polar residues). The homeobox; TALE-type DNA-binding region spans 48–111 (EHKKKRKGNL…INARRRILPD (64 aa)).

Belongs to the TALE/TGIF homeobox family.

The protein localises to the nucleus. Functionally, may have a transcription role in testis. The chain is Homeobox protein TGIF2LX (TGIF2LX) from Gorilla gorilla gorilla (Western lowland gorilla).